A 1328-amino-acid chain; its full sequence is Retrovirus-related Pol polyprotein from transposon TNT 1-94 (1328 aa).

The segment at 189–265 (PENQGQALIT…SGQKNDDNTA (77 aa)) is disordered. Residues 217–229 (ARGKSKNRSKSRV) are compositionally biased toward basic residues. The segment at 230–247 (RNCYNCNQPGHFKRDCPN) adopts a CCHC-type zinc-finger fold. A compositionally biased stretch (basic and acidic residues) spans 241 to 253 (FKRDCPNPRKGKG). Residue aspartate 297 is the For protease activity of the active site. Positions 473–642 (SSERKLNILD…IPERVWTNKE (170 aa)) constitute an Integrase catalytic domain. The span at 729–742 (TIPSTSNNPTSAES) shows a compositional bias: polar residues. Residues 729–800 (TIPSTSNNPT…RVESRRYPST (72 aa)) are disordered. Positions 770-798 (EVEHPTQGEEQHQPLRRSERPRVESRRYP) are enriched in basic and acidic residues.

The catalysed reaction is DNA(n) + a 2'-deoxyribonucleoside 5'-triphosphate = DNA(n+1) + diphosphate. This chain is Retrovirus-related Pol polyprotein from transposon TNT 1-94, found in Nicotiana tabacum (Common tobacco).